Here is a 436-residue protein sequence, read N- to C-terminus: Glutamyl-tRNA reductase (436 aa).

Substrate is bound by residues 49–52, serine 109, 114–116, and glutamine 120; these read TCNR and EGQ. The active-site Nucleophile is cysteine 50. 198-203 provides a ligand contact to NADP(+); that stretch reads GAGRMS.

This sequence belongs to the glutamyl-tRNA reductase family. Homodimer.

The catalysed reaction is (S)-4-amino-5-oxopentanoate + tRNA(Glu) + NADP(+) = L-glutamyl-tRNA(Glu) + NADPH + H(+). The protein operates within porphyrin-containing compound metabolism; protoporphyrin-IX biosynthesis; 5-aminolevulinate from L-glutamyl-tRNA(Glu): step 1/2. It functions in the pathway porphyrin-containing compound metabolism; chlorophyll biosynthesis. In terms of biological role, catalyzes the NADPH-dependent reduction of glutamyl-tRNA(Glu) to glutamate 1-semialdehyde (GSA). The protein is Glutamyl-tRNA reductase of Prochlorococcus marinus (strain AS9601).